We begin with the raw amino-acid sequence, 378 residues long: Erythronate-4-phosphate dehydrogenase (378 aa).

Positions 45 and 66 each coordinate substrate. D146 and T175 together coordinate NAD(+). Residue R208 is part of the active site. D232 contacts NAD(+). Residue E237 is part of the active site. Catalysis depends on H254, which acts as the Proton donor. NAD(+) is bound at residue G257. Y258 provides a ligand contact to substrate.

This sequence belongs to the D-isomer specific 2-hydroxyacid dehydrogenase family. PdxB subfamily. In terms of assembly, homodimer.

The protein resides in the cytoplasm. The enzyme catalyses 4-phospho-D-erythronate + NAD(+) = (R)-3-hydroxy-2-oxo-4-phosphooxybutanoate + NADH + H(+). It participates in cofactor biosynthesis; pyridoxine 5'-phosphate biosynthesis; pyridoxine 5'-phosphate from D-erythrose 4-phosphate: step 2/5. In terms of biological role, catalyzes the oxidation of erythronate-4-phosphate to 3-hydroxy-2-oxo-4-phosphonooxybutanoate. The protein is Erythronate-4-phosphate dehydrogenase of Escherichia coli O6:K15:H31 (strain 536 / UPEC).